Consider the following 267-residue polypeptide: Short chain dehydrogenase claC (267 aa).

NADP(+) is bound by residues Ile-27, Asp-73, Asn-100, and Arg-133. Residues Ser-149 and Ser-150 each act as proton donor in the active site. The NADP(+) site is built by Tyr-164, Lys-168, and Thr-199. Tyr-164 serves as the catalytic Proton acceptor. The Lowers pKa of active site Tyr role is filled by Lys-168.

This sequence belongs to the short-chain dehydrogenases/reductases (SDR) family.

It participates in pigment biosynthesis. Its function is as follows. Non-reducing polyketide synthase; part of the gene cluster that mediates the biosynthesis of the bianthraquinone cladofulvin, a conidial pigment not required for virulence but that plays a role in fitness and resistance to environmental stresses including UV light and low-temperature stress. The pathway begins with the synthesis of atrochrysone thioester by the polyketide synthase (PKS) claG. The atrochrysone carboxyl ACP thioesterase claF then breaks the thioester bond and releases the atrochrysone carboxylic acid from claG. This compound is decarboxylated by claH to yield emodin, which is further converted to chrysophanol hydroquinone by the reductase claC and the dehydratase claB. The cytochrome monooxygenase P450 claM then catalyzes the dimerization of nataloe-emodin to cladofulvin. The polypeptide is Short chain dehydrogenase claC (Passalora fulva (Tomato leaf mold)).